A 1222-amino-acid polypeptide reads, in one-letter code: Chitin synthase 4 (1222 aa).

Disordered stretches follow at residues 1–101 (MSLP…ERNR) and 138–200 (TERT…KRIE). 2 stretches are compositionally biased toward polar residues: residues 11-24 (QAYNQRSVYRNSPS) and 42-77 (NQASHQRGKSGSSFAESIGINSNTESMPLSPTSPDG). A compositionally biased stretch (basic residues) spans 182–196 (SGKIKRKSRRHSKPP). The next 2 helical transmembrane spans lie at 205-225 (PPTFWNVYCAIVTFWAPGFIM) and 243-263 (MGLISIILIIMAIVGFLTFGF). Residues Asn378, Asn418, and Asn440 are each glycosylated (N-linked (GlcNAc...) asparagine). Residues 513–533 (ALILSVVGVRFFLAIIFQWFI) form a helical membrane-spanning segment. A disordered region spans residues 576 to 630 (TVYGSSDRSSKRASFLPTTSRFSSVGGPDIRSQGGRRMPTTMASQSTSNQLLTPN). Residues 616 to 630 (TMASQSTSNQLLTPN) are compositionally biased toward polar residues. Residues Asn637 and Asn1030 are each glycosylated (N-linked (GlcNAc...) asparagine). The next 3 membrane-spanning stretches (helical) occupy residues 1055 to 1075 (FIIFVELVGTLVLPAAIAFTF), 1089 to 1109 (IIPLVLLGLILGLPGLLVIIT), and 1113 to 1133 (WSYIVWMLIYLLALPIWNFVL). The disordered stretch occupies residues 1202-1222 (GGQTWTSPPGHQYNEEYYSDA).

This sequence belongs to the chitin synthase family. Class IV subfamily.

The protein resides in the cell membrane. It carries out the reaction [(1-&gt;4)-N-acetyl-beta-D-glucosaminyl](n) + UDP-N-acetyl-alpha-D-glucosamine = [(1-&gt;4)-N-acetyl-beta-D-glucosaminyl](n+1) + UDP + H(+). Its function is as follows. Polymerizes chitin, a structural polymer of the cell wall and septum, by transferring the sugar moiety of UDP-GlcNAc to the non-reducing end of the growing chitin polymer. Shows additive effects in septum formation with CHS1, CHS2, CHS3A, CHS5, CHS6 and CHS7. Regulates conidiation. Involved in virulence and mediates mycotoxin deoxinivalenol (DON) biosynthesis via the regulation of the expression of TRI4, TRI5 and TRI6. The polypeptide is Chitin synthase 4 (Gibberella zeae (strain ATCC MYA-4620 / CBS 123657 / FGSC 9075 / NRRL 31084 / PH-1) (Wheat head blight fungus)).